Reading from the N-terminus, the 175-residue chain is Cytochrome c homolog (175 aa).

Topologically, residues 1–8 (MSGKELNK) are cytoplasmic. A helical; Signal-anchor transmembrane segment spans residues 9–29 (IVAAILFASLIAMMVGFVANI). At 30–175 (LYKPTLELQH…LFLKTYVHDK (146 aa)) the chain is on the periplasmic side. Heme c-binding residues include Cys-84, Cys-87, His-88, and Met-150.

This sequence belongs to the cytochrome c family. Post-translationally, binds 1 heme c group covalently per subunit.

The protein resides in the cell membrane. May be involved in electron transfer from bc1 complex to aa3. The protein is Cytochrome c homolog (cycM) of Rickettsia conorii (strain ATCC VR-613 / Malish 7).